The following is a 268-amino-acid chain: Phosphate import ATP-binding protein PstB (268 aa).

One can recognise an ABC transporter domain in the interval 22–263 (LAVRNLNFYY…PKQQQTQDYI (242 aa)). 54–61 (GPSGCGKS) contributes to the ATP binding site.

This sequence belongs to the ABC transporter superfamily. Phosphate importer (TC 3.A.1.7) family. As to quaternary structure, the complex is composed of two ATP-binding proteins (PstB), two transmembrane proteins (PstC and PstA) and a solute-binding protein (PstS).

The protein localises to the cell inner membrane. It carries out the reaction phosphate(out) + ATP + H2O = ADP + 2 phosphate(in) + H(+). In terms of biological role, part of the ABC transporter complex PstSACB involved in phosphate import. Responsible for energy coupling to the transport system. This chain is Phosphate import ATP-binding protein PstB, found in Gluconobacter oxydans (strain 621H) (Gluconobacter suboxydans).